The following is a 247-amino-acid chain: Epidermal cell differentiation inhibitor (247 aa).

The first 35 residues, 1 to 35 (MKNKLLFKIFLSLSLALSVYSINDKIIEVSNTSLA), serve as a signal peptide directing secretion. Positions 39 to 247 (KNFTDLDEAT…IIITAIVFKK (209 aa)) constitute a TR mART core domain. Catalysis depends on residues Arg120, Ser173, and Glu215.

This sequence to ADP-ribosyltransferase C3 of Clostridium.

Its function is as follows. Inhibits terminal differentiation of cultured mouse keratinocytes. In culture, also inhibits the differentiation of human keratinocytes. Probable ADP-ribosyltransferase. This chain is Epidermal cell differentiation inhibitor, found in Staphylococcus aureus.